Here is a 147-residue protein sequence, read N- to C-terminus: Acireductone dioxygenase (147 aa).

Fe(2+) contacts are provided by His74, His76, Glu80, and His119. Residues His74, His76, Glu80, and His119 each contribute to the Ni(2+) site.

This sequence belongs to the acireductone dioxygenase (ARD) family. Fe(2+) serves as cofactor. Ni(2+) is required as a cofactor.

It localises to the cytoplasm. It is found in the nucleus. The enzyme catalyses 1,2-dihydroxy-5-(methylsulfanyl)pent-1-en-3-one + O2 = 4-methylsulfanyl-2-oxobutanoate + formate + 2 H(+). It carries out the reaction 1,2-dihydroxy-5-(methylsulfanyl)pent-1-en-3-one + O2 = 3-(methylsulfanyl)propanoate + CO + formate + 2 H(+). Its pathway is amino-acid biosynthesis; L-methionine biosynthesis via salvage pathway; L-methionine from S-methyl-5-thio-alpha-D-ribose 1-phosphate: step 5/6. Its function is as follows. Catalyzes 2 different reactions between oxygen and the acireductone 1,2-dihydroxy-3-keto-5-methylthiopentene (DHK-MTPene) depending upon the metal bound in the active site. Fe-containing acireductone dioxygenase (Fe-ARD) produces formate and 2-keto-4-methylthiobutyrate (KMTB), the alpha-ketoacid precursor of methionine in the methionine recycle pathway. Ni-containing acireductone dioxygenase (Ni-ARD) produces methylthiopropionate, carbon monoxide and formate, and does not lie on the methionine recycle pathway. This Dictyostelium discoideum (Social amoeba) protein is Acireductone dioxygenase (adi1).